The primary structure comprises 153 residues: Coiled-coil domain-containing protein 182 (153 aa).

Positions 46-109 form a coiled coil; the sequence is ADLEILQQKV…RLREEEDRGI (64 aa).

This Homo sapiens (Human) protein is Coiled-coil domain-containing protein 182 (CCDC182).